The following is an 805-amino-acid chain: Leucine--tRNA ligase (805 aa).

A 'HIGH' region motif is present at residues 41–52 (PYPSGAGLHVGH). Positions 577 to 581 (KMSKS) match the 'KMSKS' region motif. Residue Lys-580 coordinates ATP.

Belongs to the class-I aminoacyl-tRNA synthetase family.

It localises to the cytoplasm. It carries out the reaction tRNA(Leu) + L-leucine + ATP = L-leucyl-tRNA(Leu) + AMP + diphosphate. This is Leucine--tRNA ligase from Staphylococcus aureus (strain JH1).